The sequence spans 473 residues: Asparagine--tRNA ligase (473 aa).

This sequence belongs to the class-II aminoacyl-tRNA synthetase family. As to quaternary structure, homodimer.

Its subcellular location is the cytoplasm. The enzyme catalyses tRNA(Asn) + L-asparagine + ATP = L-asparaginyl-tRNA(Asn) + AMP + diphosphate + H(+). The sequence is that of Asparagine--tRNA ligase from Treponema denticola (strain ATCC 35405 / DSM 14222 / CIP 103919 / JCM 8153 / KCTC 15104).